The following is a 433-amino-acid chain: GTPase Der (433 aa).

2 EngA-type G domains span residues 3 to 167 (NRVV…KEEK) and 175 to 347 (IKVA…KDYT). GTP contacts are provided by residues 9-16 (GRPNVGKS), 56-60 (DTGGL), 119-122 (NKID), 181-188 (GRPNVGKS), 228-232 (DTAGV), and 293-296 (NKMD). The KH-like domain maps to 348–432 (KQHKTSFVNR…PIKLVIKGRE (85 aa)).

Belongs to the TRAFAC class TrmE-Era-EngA-EngB-Septin-like GTPase superfamily. EngA (Der) GTPase family. Associates with the 50S ribosomal subunit.

GTPase that plays an essential role in the late steps of ribosome biogenesis. This Aquifex aeolicus (strain VF5) protein is GTPase Der.